Reading from the N-terminus, the 231-residue chain is Augmin complex subunit dgt2 (231 aa).

Positions 128 to 199 (QEADLSCDQK…VQTKAELLRG (72 aa)) form a coiled coil.

Component of the augmin complex composed of dgt2, dgt3, dgt4, dgt5, dgt6, msd1, msd5 and wac. The complex interacts directly or indirectly with microtubules and is required for centrosome-independent generation of spindle microtubules. dgt2 interacts directly with wac (via coiled coil). In terms of tissue distribution, in adult females, detected only in the abdomen with no expression in the head or thorax (at protein level).

It localises to the cytoplasm. It is found in the cytoskeleton. The protein resides in the spindle. The protein localises to the spindle pole. Functionally, as part of the augmin complex, plays a role in centrosome-independent generation of spindle microtubules. The complex is required for mitotic spindle assembly through its involvement in localizing gamma-tubulin to spindle microtubules. dgt2 binds to microtubules in vitro. This chain is Augmin complex subunit dgt2, found in Drosophila melanogaster (Fruit fly).